The chain runs to 563 residues: MKKFLVLLIALIMIATLLVVPGVQTSAEGSYADLAEPDDDWLHVEGTNIVDKYGNKVWITGANWFGFNCRERMLLDSYHSDIIADIELVADKGINVVRMPIATDLLYAWSQGIYPPSTDTSYNNPALAGLNSYELFNFMLENFKRVGIKVILDVHSPETDNQGHNYPLWYNTTITEEIFKKAWVWVAERYKNDDTIIGFDLKNEPHTNTGTMKIKAQSAIWDDSNHPNNWKRVAEETALAILEVHPNVLIFVEGVEMYPKDGIWDDETFDTSPWTGNNDYYGNWWGGNLRGVKDYPINLGKYQSQLVYSPHDYGPIVYEQDWFKGDFITANDEQAKRILYEQCWRDNWAYIMEEGISPLLLGEWGGMTEGGHPLLDLNLKYLRCMRDFILENKYKLHHTFWCINIDSADTGGLFTRDEGTPFPGGRDLKWNDNKYDNYLYPVLWKTEDGKFIGLDHKIPLGRNGISISQLSNYTPSVTPSPSATPSPTTITAPPTDTVTYGDVNGDGRVNSSDVALLKRYLLGLVENINKEAADVNVSGTVNSTDLAIMKRYVLRSISELPYK.

Residues 1-27 (MKKFLVLLIALIMIATLLVVPGVQTSA) constitute a signal peptide (or 31). E204 acts as the Proton donor in catalysis. E363 acts as the Nucleophile in catalysis. The segment at 476 to 495 (SVTPSPSATPSPTTITAPPT) is disordered. The Dockerin domain occupies 496–562 (DTVTYGDVNG…VLRSISELPY (67 aa)).

Belongs to the glycosyl hydrolase 5 (cellulase A) family.

It carries out the reaction Endohydrolysis of (1-&gt;4)-beta-D-glucosidic linkages in cellulose, lichenin and cereal beta-D-glucans.. In terms of biological role, this enzyme catalyzes the endohydrolysis of 1,4-beta-glucosidic linkages in cellulose, lichenin and cereal beta-D-glucans. In Acetivibrio thermocellus (strain ATCC 27405 / DSM 1237 / JCM 9322 / NBRC 103400 / NCIMB 10682 / NRRL B-4536 / VPI 7372) (Clostridium thermocellum), this protein is Endoglucanase B (celB).